Consider the following 78-residue polypeptide: Surfactant-associated protein 2 (78 aa).

Positions 1–19 (MGSGLPLVLLLTLLGSSHG) are cleaved as a signal peptide. N-linked (GlcNAc...) asparagine glycosylation is present at Asn-37.

In terms of processing, N-glycosylated. Predominantly expressed in lung, where it is detected in type II pneumocytes in the alveolus, and in nonciliated epithelium in bronchioli (at protein level). Also detected at lower levels in cervix, esophagus, stomach, testis and kidney.

Its subcellular location is the secreted. The protein localises to the cytoplasmic vesicle. The protein resides in the secretory vesicle. It localises to the golgi apparatus. Functionally, putative surfactant protein. In Homo sapiens (Human), this protein is Surfactant-associated protein 2 (SFTA2).